Consider the following 259-residue polypeptide: Glutamate racemase (259 aa).

Substrate-binding positions include 9 to 10 and 41 to 42; these read DS and YG. Residue Cys-73 is the Proton donor/acceptor of the active site. 74 to 75 contributes to the substrate binding site; it reads NT. Cys-183 (proton donor/acceptor) is an active-site residue. 184–185 contributes to the substrate binding site; it reads TH.

It belongs to the aspartate/glutamate racemases family.

It catalyses the reaction L-glutamate = D-glutamate. It participates in cell wall biogenesis; peptidoglycan biosynthesis. Functionally, provides the (R)-glutamate required for cell wall biosynthesis. In Shewanella frigidimarina (strain NCIMB 400), this protein is Glutamate racemase.